A 474-amino-acid polypeptide reads, in one-letter code: 3-isopropylmalate dehydratase large subunit (474 aa).

3 residues coordinate [4Fe-4S] cluster: cysteine 350, cysteine 411, and cysteine 414.

Belongs to the aconitase/IPM isomerase family. LeuC type 1 subfamily. Heterodimer of LeuC and LeuD. Requires [4Fe-4S] cluster as cofactor.

It carries out the reaction (2R,3S)-3-isopropylmalate = (2S)-2-isopropylmalate. Its pathway is amino-acid biosynthesis; L-leucine biosynthesis; L-leucine from 3-methyl-2-oxobutanoate: step 2/4. Functionally, catalyzes the isomerization between 2-isopropylmalate and 3-isopropylmalate, via the formation of 2-isopropylmaleate. The protein is 3-isopropylmalate dehydratase large subunit of Hydrogenovibrio crunogenus (strain DSM 25203 / XCL-2) (Thiomicrospira crunogena).